The sequence spans 126 residues: MPKKAGATSKGKNQTKEPETPPPPTGPVATDSKGFVTIAIHAKPGSKQNAVTDLNTEAVGVAIAAPPSEGEANAELCRYLSKVLDLRKSDVVLDKGGKSREKVVKLLASTTPEEVLEKLRTEAEKK.

Residues 1 to 33 (MPKKAGATSKGKNQTKEPETPPPPTGPVATDSK) form a disordered region. Ser-89 carries the post-translational modification Phosphoserine.

Belongs to the UPF0235 family.

The polypeptide is UPF0235 protein C15orf40 homolog (Rattus norvegicus (Rat)).